The chain runs to 252 residues: Small ribosomal subunit protein uS2A (252 aa).

Ser2 is subject to N-acetylserine. A disordered region spans residues 209-252 (EVEQQAAEETTSTGADAEESKEEVAEGQNEASEWAEENTEAVSW). A compositionally biased stretch (acidic residues) spans 241 to 252 (EWAEENTEAVSW).

It belongs to the universal ribosomal protein uS2 family. Component of the small ribosomal subunit. Mature ribosomes consist of a small (40S) and a large (60S) subunit. The 40S subunit contains about 33 different proteins and 1 molecule of RNA (18S). The 60S subunit contains about 49 different proteins and 3 molecules of RNA (25S, 5.8S and 5S). Interacts with RPS21.

It localises to the cytoplasm. Its function is as follows. Required for the assembly and/or stability of the 40S ribosomal subunit. Required for the processing of the 20S rRNA-precursor to mature 18S rRNA in a late step of the maturation of 40S ribosomal subunits. This is Small ribosomal subunit protein uS2A from Vanderwaltozyma polyspora (strain ATCC 22028 / DSM 70294 / BCRC 21397 / CBS 2163 / NBRC 10782 / NRRL Y-8283 / UCD 57-17) (Kluyveromyces polysporus).